We begin with the raw amino-acid sequence, 172 residues long: Large ribosomal subunit protein uL10 (172 aa).

This sequence belongs to the universal ribosomal protein uL10 family. Part of the ribosomal stalk of the 50S ribosomal subunit. The N-terminus interacts with L11 and the large rRNA to form the base of the stalk. The C-terminus forms an elongated spine to which L12 dimers bind in a sequential fashion forming a multimeric L10(L12)X complex.

Forms part of the ribosomal stalk, playing a central role in the interaction of the ribosome with GTP-bound translation factors. The chain is Large ribosomal subunit protein uL10 from Chlorobium phaeobacteroides (strain DSM 266 / SMG 266 / 2430).